We begin with the raw amino-acid sequence, 347 residues long: GMP reductase (347 aa).

Residue 108-131 coordinates NADP(+); sequence ADFEKTKQILDLNPALNFVCIDVA. Residues glycine 181 and glycine 183 each contribute to the K(+) site. Catalysis depends on cysteine 186, which acts as the Thioimidate intermediate. Residue 216–239 participates in NADP(+) binding; sequence IVSDGGCTTPGDVAKAFGGGADFV.

The protein belongs to the IMPDH/GMPR family. GuaC type 1 subfamily. Homotetramer.

It catalyses the reaction IMP + NH4(+) + NADP(+) = GMP + NADPH + 2 H(+). Catalyzes the irreversible NADPH-dependent deamination of GMP to IMP. It functions in the conversion of nucleobase, nucleoside and nucleotide derivatives of G to A nucleotides, and in maintaining the intracellular balance of A and G nucleotides. This chain is GMP reductase, found in Shigella boydii serotype 18 (strain CDC 3083-94 / BS512).